The following is a 462-amino-acid chain: A-type ATP synthase subunit B (462 aa).

Belongs to the ATPase alpha/beta chains family. As to quaternary structure, has multiple subunits with at least A(3), B(3), C, D, E, F, H, I and proteolipid K(x).

The protein localises to the cell membrane. Component of the A-type ATP synthase that produces ATP from ADP in the presence of a proton gradient across the membrane. The B chain is a regulatory subunit. The protein is A-type ATP synthase subunit B of Methanococcus maripaludis (strain C6 / ATCC BAA-1332).